The chain runs to 451 residues: Adenylosuccinate synthetase isozyme 2 (451 aa).

GTP is bound by residues 34–40 (GDEGKGK) and 62–64 (GHT). Residue Asp-35 is the Proton acceptor of the active site. The Mg(2+) site is built by Asp-35 and Gly-62. Residue Asp-35 participates in substrate binding. Residues 35-38 (DEGK), 60-63 (NAGH), Thr-157, Arg-171, Asn-250, Thr-265, and Arg-329 each bind IMP. His-63 (proton donor) is an active-site residue. A substrate-binding site is contributed by 325 to 331 (VTTGRKR). GTP-binding positions include Arg-331, 357–359 (KLD), and 439–442 (GVGK).

This sequence belongs to the adenylosuccinate synthetase family. As to quaternary structure, homodimer. Mg(2+) is required as a cofactor.

The protein localises to the cytoplasm. The protein resides in the mitochondrion. It catalyses the reaction IMP + L-aspartate + GTP = N(6)-(1,2-dicarboxyethyl)-AMP + GDP + phosphate + 2 H(+). It participates in purine metabolism; AMP biosynthesis via de novo pathway; AMP from IMP: step 1/2. With respect to regulation, inhibited competitively by AMP and IMP and non-competitively by fructose 1,6-bisphosphate. Functionally, plays an important role in the de novo pathway and in the salvage pathway of purine nucleotide biosynthesis. Catalyzes the first committed step in the biosynthesis of AMP from IMP. The chain is Adenylosuccinate synthetase isozyme 2 from Gallus gallus (Chicken).